A 653-amino-acid chain; its full sequence is Large subunit GTPase 1 homolog (653 aa).

The segment at 1–47 is disordered; sequence MGKKRGTGLGRSLQRQRGSERRGASSWLHASEVVGESGPERRSAVEQ. One can recognise a CP-type G domain in the interval 155 to 439; that stretch reads WRQLWRVIER…LCDCPGLVMP (285 aa). 203–206 lines the GTP pocket; it reads NKAD. A compositionally biased stretch (acidic residues) spans 248–275; sequence ADSVADDLSDSEEESSSQEEDVTAEDSA. Positions 248 to 323 are disordered; sequence ADSVADDLSD…TCSEDEGGDK (76 aa). A compositionally biased stretch (polar residues) spans 276–291; that stretch reads ESTSTGSALQTENQCL. Acidic residues predominate over residues 293-320; it reads SDDDSSDEYEDCEDEEEDDWQTCSEDEG. GTP contacts are provided by residues 388 to 395 and 432 to 435; these read GYPNVGKS and DCPG. The disordered stretch occupies residues 621–653; that stretch reads APSAGSVVGKPWKKHGNRNKKEKVRRITKHLEN. The span at 631–653 shows a compositional bias: basic residues; sequence PWKKHGNRNKKEKVRRITKHLEN.

Belongs to the TRAFAC class YlqF/YawG GTPase family. LSG1 subfamily.

Its subcellular location is the cytoplasm. The protein localises to the endoplasmic reticulum. It localises to the nucleus. It is found in the cajal body. It catalyses the reaction GTP + H2O = GDP + phosphate + H(+). In terms of biological role, GTPase required for the XPO1/CRM1-mediated nuclear export of the 60S ribosomal subunit. Probably acts by mediating the release of NMD3 from the 60S ribosomal subunit after export into the cytoplasm. Functions as a GTPase. May act by mediating the release of NMD3 from the 60S ribosomal subunit after export into the cytoplasm during the 60S ribosomal subunit maturation. The polypeptide is Large subunit GTPase 1 homolog (Gallus gallus (Chicken)).